The chain runs to 607 residues: Dihydroxy-acid dehydratase (607 aa).

Position 81 (aspartate 81) interacts with Mg(2+). Cysteine 122 is a binding site for [2Fe-2S] cluster. 2 residues coordinate Mg(2+): aspartate 123 and lysine 124. Lysine 124 is subject to N6-carboxylysine. Cysteine 195 is a [2Fe-2S] cluster binding site. Glutamate 489 is a Mg(2+) binding site. The active-site Proton acceptor is the serine 515.

The protein belongs to the IlvD/Edd family. As to quaternary structure, homodimer. The cofactor is [2Fe-2S] cluster. Mg(2+) serves as cofactor.

The enzyme catalyses (2R)-2,3-dihydroxy-3-methylbutanoate = 3-methyl-2-oxobutanoate + H2O. It carries out the reaction (2R,3R)-2,3-dihydroxy-3-methylpentanoate = (S)-3-methyl-2-oxopentanoate + H2O. The protein operates within amino-acid biosynthesis; L-isoleucine biosynthesis; L-isoleucine from 2-oxobutanoate: step 3/4. It functions in the pathway amino-acid biosynthesis; L-valine biosynthesis; L-valine from pyruvate: step 3/4. Functions in the biosynthesis of branched-chain amino acids. Catalyzes the dehydration of (2R,3R)-2,3-dihydroxy-3-methylpentanoate (2,3-dihydroxy-3-methylvalerate) into 2-oxo-3-methylpentanoate (2-oxo-3-methylvalerate) and of (2R)-2,3-dihydroxy-3-methylbutanoate (2,3-dihydroxyisovalerate) into 2-oxo-3-methylbutanoate (2-oxoisovalerate), the penultimate precursor to L-isoleucine and L-valine, respectively. This Deinococcus radiodurans (strain ATCC 13939 / DSM 20539 / JCM 16871 / CCUG 27074 / LMG 4051 / NBRC 15346 / NCIMB 9279 / VKM B-1422 / R1) protein is Dihydroxy-acid dehydratase.